Consider the following 419-residue polypeptide: Gamma-glutamyl phosphate reductase (419 aa).

Belongs to the gamma-glutamyl phosphate reductase family.

The protein resides in the cytoplasm. The enzyme catalyses L-glutamate 5-semialdehyde + phosphate + NADP(+) = L-glutamyl 5-phosphate + NADPH + H(+). It participates in amino-acid biosynthesis; L-proline biosynthesis; L-glutamate 5-semialdehyde from L-glutamate: step 2/2. Catalyzes the NADPH-dependent reduction of L-glutamate 5-phosphate into L-glutamate 5-semialdehyde and phosphate. The product spontaneously undergoes cyclization to form 1-pyrroline-5-carboxylate. In Tolumonas auensis (strain DSM 9187 / NBRC 110442 / TA 4), this protein is Gamma-glutamyl phosphate reductase.